Here is a 523-residue protein sequence, read N- to C-terminus: DELLA protein RGL3 (523 aa).

Residues 1-28 (MKRSHQETSVEEEAPSMVEKLENGCGGG) are disordered. Positions 34–38 (DEFLA) match the DELLA motif motif. The LEXLE motif signature appears at 56-60 (LEQLE). The short motif at 78–82 (VHYNP) is the VHYNP motif element. The GRAS domain maps to 148–516 (VLIEETGVRL…KPLIAASAWK (369 aa)). The leucine repeat I (LRI) stretch occupies residues 155–209 (VRLVQALVACAEAVQLENLSLADALVKRVGLLAASQAGAMGKVATYFAEALARRI). The segment at 228–293 (QMNFYDSCPY…GGPPSFRLTG (66 aa)) is VHIID. Residues 259–263 (VHVID) carry the VHIID motif. A leucine repeat II (LRII) region spans residues 305–337 (ELGWKLAQLAQAIGVEFKFNGLTTERLSDLEPD). Residues 348 to 437 (LVVNSVFELH…EVYLGRQILN (90 aa)) form a PFYRE region. The short motif at 356–360 (LHPVL) is the LXXLL motif element. The segment at 440–516 (ATEGSDRIER…KPLIAASAWK (77 aa)) is SAW.

The protein belongs to the GRAS family. DELLA subfamily. Interacts directly with the GID2/SLY1 component of the SCF(GID2) complex, suggesting that it may be ubiquitinated. Interacts (via N-terminus) with GID1A, GID1B and GID1B (via N-terminus). Interacts with the BOI proteins BOI, BRG1, BRG2 and BRG3. Phosphorylated. Post-translationally, may be ubiquitinated. As to expression, expressed at very low level. Mainly expressed in germinating seeds and flowers and siliques. Not expressed in other tissues.

It is found in the nucleus. Its function is as follows. Probable transcriptional regulator that acts as a repressor of the gibberellin (GA) signaling pathway. No effect of the BOI proteins on its stability. Probably acts by participating in large multiprotein complexes that repress transcription of GA-inducible genes. Its activity may be regulated by phytohormones such as auxin and ethylene. This is DELLA protein RGL3 (RGL3) from Arabidopsis thaliana (Mouse-ear cress).